A 294-amino-acid chain; its full sequence is Holothin acyltransferase (294 aa).

The N-acetyltransferase domain occupies 17–146; that stretch reads WTSKPASLEE…SRLVGIHNQQ (130 aa).

It carries out the reaction marinoloyl-CoA C + holothin = thiomarinol C + CoA. The enzyme catalyses pseudomonoyl-CoA C + holothin = pseudomonic acid C--holothin + CoA. Its pathway is antibiotic biosynthesis. Acyltransferase that catalyzes the formation of pseudomonic acid C-holothin (PAC-holothin), a thiomarinol analog, from pseudomonoyl-CoA C (PAC-CoA) and holothin. Accepts linear CoA substrates of different lengths, including propionyl-, hexanoyl-, octanoyl-, oleoyl- and dodecanoyl-CoA, readily converting all into the corresponding acyl-holothin adducts. In vivo, is probably involved in the biosynthesis of thiomarinol, a naturally occurring double-headed antibiotic. This chain is Holothin acyltransferase, found in Pseudoalteromonas sp. (strain SANK 73390).